Here is a 127-residue protein sequence, read N- to C-terminus: Small ribosomal subunit protein uS12m (127 aa).

This sequence belongs to the universal ribosomal protein uS12 family.

The protein resides in the mitochondrion. The polypeptide is Small ribosomal subunit protein uS12m (RPS12) (Acanthamoeba castellanii (Amoeba)).